The primary structure comprises 581 residues: MAAPKLESFRRGSMFDGSFRRGSMFDGSFRQSMRDRLILQSRGYSNVNDDDKTSVRCCSYSYFSDKITGVVKKLKDVLVTAWEMGTADPRKMIFSAKMGLALTLTSILIFFKIPGLELSGHYLWAILTVVVIFEFSIGATFSKGCNRGLGTLSAGGLALGMSWISEMTGNWADVFNAASIFVVAFFATYAKLYPTMKPYEYGFRVFLLTYCYVIVSGYKTGEFMETAVSRFLLIALGASVGLIVNTCIYPIWAGEDLHNLVAKNFVNVATSLEGCVNGYLECVAYDTIPSRILVYEAVAEDPVYSGYRSAVQSTSQEDTLMSFASWEPPHGPYKSFRYPWALYVKVGGALRHCAIMVMALHGCILSEIQAAEDRRREFRNELQRVGIEGAKVLRYIGESLKKMEKLNPIEDILYEIHQAAEELQSKIDKKSYLLVNAKNWEIGNRPRVRDLTDEQKISNLDSDLSRILAHKSQSEATLRPPKNWDDVTTAANLSSATMLPYLQSRTMIHKQPSWPSRISITPGSMLQPPLGEPGKMYESASNLSLATFASLLIEFVARLENLVNAYDELSVKANFKEAVSE.

6 consecutive transmembrane segments (helical) span residues 98 to 118 (MGLA…GLEL), 122 to 142 (YLWA…ATFS), 148 to 164 (GLGT…MSWI), 167 to 187 (MTGN…AFFA), 201 to 218 (YGFR…VSGY), and 231 to 251 (FLLI…IYPI).

It belongs to the aromatic acid exporter (TC 2.A.85) family.

It localises to the membrane. In terms of biological role, malate transporter. The sequence is that of Putative aluminum-activated malate transporter 3 (ALMT3) from Arabidopsis thaliana (Mouse-ear cress).